Here is a 133-residue protein sequence, read N- to C-terminus: NLP effector protein 14 (133 aa).

The short motif at 1 to 9 is the Conserved undecapeptide motifI I element; the sequence is MYSWYFPKD. The Hepta-peptide GHRHDWE motif II signature appears at 16–22; sequence GHRHDWE.

Belongs to the Necrosis inducing protein (NPP1) family.

It localises to the secreted. In terms of biological role, secreted effector that contributes strongly to virulence during infection by P.capsici. Causes large necrotic areas in both host C.annuum and non-host N.benthamiana. This chain is NLP effector protein 14, found in Phytophthora capsici.